Reading from the N-terminus, the 510-residue chain is MDIRAAEISAILKSQIANFGEEAAVSDVGQVLSVGDGIARIYGLDNVQAGEMVEFPKAGVKGMALNLERDNVGAVIFGQDQAIKEGDEVRRLGEIVDVPVGRGLLGRVVNPLGEPIDGKGPIVSTERRRVDVKAPGIIPRKSVHEPVQTGLKSIDTLIPVGRGQRELIIGDRQTGKTAVAIDTILNQKAANAGTDESAKLYCVYVAIGQKRSTVAQIVKTLEEHGALEYTIVVVASASEPAPLQYLAPFSGCAMGEWFRDNGLHGLIIYDDLSKQAVAYRQMSLLLRRPPGREAYPGDVFYLHSRLLERAAKLNEDNGSGSLTALPIIETQANDVSAYIPTNVISITDGQIFLETDLFYQGIRPAVNVGISVSRVGSSAQIKAMKQVAGAIKGELAQYREMAAFAKFGSDLDASTQKLLARGERLTELLKQPQYAPQAVEEQVCVIYAGTRGYLDNIPTSSVRRFESELLARLHSQHKDLLDNIRTKKALDKDLENTLKSVLDNFSATFA.

An ATP-binding site is contributed by 170–177 (GDRQTGKT).

It belongs to the ATPase alpha/beta chains family. F-type ATPases have 2 components, CF(1) - the catalytic core - and CF(0) - the membrane proton channel. CF(1) has five subunits: alpha(3), beta(3), gamma(1), delta(1), epsilon(1). CF(0) has three main subunits: a(1), b(2) and c(9-12). The alpha and beta chains form an alternating ring which encloses part of the gamma chain. CF(1) is attached to CF(0) by a central stalk formed by the gamma and epsilon chains, while a peripheral stalk is formed by the delta and b chains.

The protein localises to the cell inner membrane. It carries out the reaction ATP + H2O + 4 H(+)(in) = ADP + phosphate + 5 H(+)(out). Functionally, produces ATP from ADP in the presence of a proton gradient across the membrane. The alpha chain is a regulatory subunit. In Caulobacter sp. (strain K31), this protein is ATP synthase subunit alpha.